The sequence spans 954 residues: Glycine dehydrogenase (decarboxylating) (954 aa).

An N6-(pyridoxal phosphate)lysine modification is found at Lys-706.

The protein belongs to the GcvP family. As to quaternary structure, the glycine cleavage system is composed of four proteins: P, T, L and H. The cofactor is pyridoxal 5'-phosphate.

The enzyme catalyses N(6)-[(R)-lipoyl]-L-lysyl-[glycine-cleavage complex H protein] + glycine + H(+) = N(6)-[(R)-S(8)-aminomethyldihydrolipoyl]-L-lysyl-[glycine-cleavage complex H protein] + CO2. In terms of biological role, the glycine cleavage system catalyzes the degradation of glycine. The P protein binds the alpha-amino group of glycine through its pyridoxal phosphate cofactor; CO(2) is released and the remaining methylamine moiety is then transferred to the lipoamide cofactor of the H protein. The protein is Glycine dehydrogenase (decarboxylating) of Thermosynechococcus vestitus (strain NIES-2133 / IAM M-273 / BP-1).